We begin with the raw amino-acid sequence, 338 residues long: L-serine dehydratase (338 aa).

At K39 the chain carries N6-(pyridoxal phosphate)lysine.

It belongs to the serine/threonine dehydratase family. Pyridoxal 5'-phosphate serves as cofactor.

Its subcellular location is the cytoplasm. It carries out the reaction L-serine = pyruvate + NH4(+). It participates in carbohydrate biosynthesis; gluconeogenesis. This chain is L-serine dehydratase (SDL1), found in Saccharomyces cerevisiae (Baker's yeast).